A 366-amino-acid chain; its full sequence is Probable UDP-arabinopyranose mutase 2 (366 aa).

The DXD motif signature appears at 104-106; the sequence is DDD. Arg-152 carries an N-linked (Glc...) arginine glycan.

This sequence belongs to the RGP family. Homopentamer or homohexamer. Mn(2+) serves as cofactor. It depends on Mg(2+) as a cofactor. Reversibly glycosylated by UDP-glucose, UDP-xylose and UDP-galactose, but not UDP-mannose. As to expression, expressed in all tissues tested, including root, tuber, leaf, petiole, shoot, stolon and stem.

Its subcellular location is the secreted. It is found in the cell wall. The protein resides in the cell junction. It localises to the plasmodesma. The protein localises to the golgi apparatus. It catalyses the reaction UDP-beta-L-arabinofuranose = UDP-beta-L-arabinopyranose. Functionally, probable UDP-L-arabinose mutase involved in the biosynthesis of cell wall non-cellulosic polysaccharides. Was initially shown to possess an autoglycosylating activity which is dependent on the presence of UDP-glucose and manganese. This chain is Probable UDP-arabinopyranose mutase 2, found in Solanum tuberosum (Potato).